Here is a 314-residue protein sequence, read N- to C-terminus: uncharacterized protein (314 aa).

A run of 10 helical transmembrane segments spans residues 4–23 (FFIG…YFSG), 36–53 (FNKL…FVSI), 68–90 (TLVS…YKFF), 97–116 (AAVC…GFAV), 131–153 (VAII…LNPS), 174–196 (PVVW…PAAW), 200–222 (FNLI…LAAH), 229–251 (EIAY…VGMA), 261–283 (MMVL…RFNV), and 290–309 (ASLA…WIYV).

This sequence belongs to the auxin efflux carrier (TC 2.A.69) family.

The protein localises to the cell membrane. This is an uncharacterized protein from Escherichia coli O157:H7.